The chain runs to 154 residues: Malate dehydrogenase (154 aa).

Positions 3 and 9 each coordinate substrate. Residues N16 and I39 to N41 contribute to the NAD(+) site. Residues N41 and R75 each coordinate substrate. H99 acts as the Proton acceptor in catalysis. Position 149 (M149) interacts with NAD(+).

This sequence belongs to the LDH/MDH superfamily. MDH type 1 family. In terms of assembly, homodimer.

The enzyme catalyses (S)-malate + NAD(+) = oxaloacetate + NADH + H(+). Its function is as follows. Catalyzes the reversible oxidation of malate to oxaloacetate. In Pectobacterium carotovorum subsp. carotovorum (Erwinia carotovora subsp. carotovora), this protein is Malate dehydrogenase (mdh).